Reading from the N-terminus, the 279-residue chain is Peptide deformylase 1B, chloroplastic (279 aa).

Fe cation is bound by residues Cys-177 and His-219. Glu-220 is a catalytic residue. His-223 is a binding site for Fe cation.

This sequence belongs to the polypeptide deformylase family. Fe(2+) is required as a cofactor.

It is found in the plastid. The protein resides in the chloroplast. It carries out the reaction N-terminal N-formyl-L-methionyl-[peptide] + H2O = N-terminal L-methionyl-[peptide] + formate. Functionally, removes the formyl group from the N-terminal Met of newly synthesized proteins. This Solanum lycopersicum (Tomato) protein is Peptide deformylase 1B, chloroplastic (PDF1B).